The chain runs to 201 residues: Akirin (201 aa).

The interval 1–133 (MACATLKRAL…PRRPDSPQNL (133 aa)) is disordered. The short motif at 20–25 (PKRRRC) is the Nuclear localization signal element. Residues Ser-39 and Ser-41 each carry the phosphoserine modification. Composition is skewed to polar residues over residues 44–57 (GPST…TPSN) and 65–75 (EPSPFSESSLA). Ser-67 is subject to Phosphoserine. Residues 112–122 (SESSGSEMGPE) are compositionally biased toward low complexity. A phosphoserine mark is found at Ser-123 and Ser-129.

The protein belongs to the akirin family. In terms of assembly, interacts with dmap1. Interacts with bap60 and rel; interaction is immune stimulation-dependent; activates selected rel target gene promoters. Interacts with bap55; interaction is immune stimulation-dependent. Interacts with twi. Post-translationally, polyubiquitinated via 'Lys-63'-linked ubiquitin by Hyd, promoting interaction with rel. As to expression, ubiquitous.

The protein resides in the nucleus. Functionally, molecular adapter that acts as a bridge between a variety of multiprotein complexes, and which is required for embryonic development and for normal innate immune response. Acts as a regulator of embryonic myogenesis by bridging Twist (twi) with the SWI/SNF-like Brahma complex, promoting expression of twi-regulated genes during myogenesis. Effector of immune deficiency pathway (Imd) by acting either downstream of, or at the level of, the NF-kappa-B factor Relish (Rel). Acts by bridging the NF-kappa-B factor Rel and the Brahma complex through bap60 interaction, leading to activation a subset of NF-kappa-B factor Relish (Rel) effector genes. Not part of the Toll pathway. Required for the formation of the heart by promoting expression ot tinman (tin). This Drosophila melanogaster (Fruit fly) protein is Akirin.